A 254-amino-acid chain; its full sequence is Esterase YbfF (254 aa).

Residues Ser89 and His234 contribute to the active site.

The protein belongs to the DmpD/TodF/XylF esterase family.

Displays esterase activity toward palmitoyl-CoA, malonyl-CoA and pNP-butyrate. This is Esterase YbfF (ybfF) from Escherichia coli (strain K12).